We begin with the raw amino-acid sequence, 515 residues long: ATP synthase subunit alpha (515 aa).

169-176 (GDRQTGKT) is an ATP binding site.

The protein belongs to the ATPase alpha/beta chains family. In terms of assembly, F-type ATPases have 2 components, CF(1) - the catalytic core - and CF(0) - the membrane proton channel. CF(1) has five subunits: alpha(3), beta(3), gamma(1), delta(1), epsilon(1). CF(0) has three main subunits: a(1), b(2) and c(9-12). The alpha and beta chains form an alternating ring which encloses part of the gamma chain. CF(1) is attached to CF(0) by a central stalk formed by the gamma and epsilon chains, while a peripheral stalk is formed by the delta and b chains.

Its subcellular location is the cell inner membrane. The enzyme catalyses ATP + H2O + 4 H(+)(in) = ADP + phosphate + 5 H(+)(out). Produces ATP from ADP in the presence of a proton gradient across the membrane. The alpha chain is a regulatory subunit. The polypeptide is ATP synthase subunit alpha (Myxococcus xanthus).